Consider the following 306-residue polypeptide: Glutaminase (306 aa).

Ser61, Asn111, Glu155, Asn162, Tyr186, Tyr238, and Val256 together coordinate substrate.

It belongs to the glutaminase family. As to quaternary structure, homotetramer.

The catalysed reaction is L-glutamine + H2O = L-glutamate + NH4(+). In Pseudomonas entomophila (strain L48), this protein is Glutaminase.